The chain runs to 209 residues: Chaperone protein TorD (209 aa).

The protein belongs to the TorD/DmsD family. TorD subfamily.

It is found in the cytoplasm. Its function is as follows. Involved in the biogenesis of TorA. Acts on TorA before the insertion of the molybdenum cofactor and, as a result, probably favors a conformation of the apoenzyme that is competent for acquiring the cofactor. In Salmonella bongori (strain ATCC 43975 / DSM 13772 / NCTC 12419), this protein is Chaperone protein TorD.